A 154-amino-acid chain; its full sequence is Crossover junction endodeoxyribonuclease RuvC (154 aa).

Residues Asp7, Glu67, and Asp139 contribute to the active site. Positions 7, 67, and 139 each coordinate Mg(2+).

It belongs to the RuvC family. Homodimer which binds Holliday junction (HJ) DNA. The HJ becomes 2-fold symmetrical on binding to RuvC with unstacked arms; it has a different conformation from HJ DNA in complex with RuvA. In the full resolvosome a probable DNA-RuvA(4)-RuvB(12)-RuvC(2) complex forms which resolves the HJ. The cofactor is Mg(2+).

It is found in the cytoplasm. It catalyses the reaction Endonucleolytic cleavage at a junction such as a reciprocal single-stranded crossover between two homologous DNA duplexes (Holliday junction).. In terms of biological role, the RuvA-RuvB-RuvC complex processes Holliday junction (HJ) DNA during genetic recombination and DNA repair. Endonuclease that resolves HJ intermediates. Cleaves cruciform DNA by making single-stranded nicks across the HJ at symmetrical positions within the homologous arms, yielding a 5'-phosphate and a 3'-hydroxyl group; requires a central core of homology in the junction. The consensus cleavage sequence is 5'-(A/T)TT(C/G)-3'. Cleavage occurs on the 3'-side of the TT dinucleotide at the point of strand exchange. HJ branch migration catalyzed by RuvA-RuvB allows RuvC to scan DNA until it finds its consensus sequence, where it cleaves and resolves the cruciform DNA. This chain is Crossover junction endodeoxyribonuclease RuvC, found in Prochlorococcus marinus (strain NATL1A).